The primary structure comprises 160 residues: Glyoxalase domain-containing protein 5 (160 aa).

A VOC domain is found at 33–153 (RLDHLVLTVR…DQNLIEVSNY (121 aa)).

The protein belongs to the glyoxalase I family.

The sequence is that of Glyoxalase domain-containing protein 5 (glod5) from Xenopus tropicalis (Western clawed frog).